A 398-amino-acid chain; its full sequence is Argininosuccinate synthase (398 aa).

8-16 contacts ATP; the sequence is AYSGGLDTS. Y87 serves as a coordination point for L-citrulline. G117 contacts ATP. L-aspartate contacts are provided by T119, N123, and D124. An L-citrulline-binding site is contributed by N123. L-citrulline-binding residues include R127, S175, E260, and Y272.

It belongs to the argininosuccinate synthase family. Type 1 subfamily. In terms of assembly, homotetramer.

It localises to the cytoplasm. The enzyme catalyses L-citrulline + L-aspartate + ATP = 2-(N(omega)-L-arginino)succinate + AMP + diphosphate + H(+). The protein operates within amino-acid biosynthesis; L-arginine biosynthesis; L-arginine from L-ornithine and carbamoyl phosphate: step 2/3. The chain is Argininosuccinate synthase from Mycobacterium marinum (strain ATCC BAA-535 / M).